Reading from the N-terminus, the 1088-residue chain is Serine/threonine-protein kinase 11-interacting protein (1088 aa).

LRR repeat units follow at residues 109-130 (SLRH…RGIY), 132-152 (QLET…LSAC), 164-185 (ALLS…LRLL), 187-209 (ALRF…MDLC), 210-231 (ELHH…GPSG), 233-254 (ALGV…EQLR), 255-276 (NLRH…SPLW), and 280-301 (ELRK…RAAT). 2 disordered regions span residues 335–407 (GLSP…SPAG) and 437–533 (LEPS…QKEV). Residues 346 to 367 (PVGSTPETSGGPDLSDSLSSGG) show a composition bias toward low complexity. A compositionally biased stretch (basic residues) spans 375–385 (HKVKSRVRVRR). Residues serine 387, serine 389, and serine 392 each carry the phosphoserine modification. The segment covering 447-460 (TPTTSAPSAPPASS) has biased composition (low complexity). Serine 470 is modified (phosphoserine). A compositionally biased stretch (acidic residues) spans 508–529 (EEGEMVEQGEEEAGEEEEEEQD). Serine 599 bears the Phosphoserine mark. 2 disordered regions span residues 724 to 780 (TPNR…SPPP) and 978 to 1009 (DAAG…PAVR). A compositionally biased stretch (polar residues) spans 733–742 (EQSLAPSPSA). The segment covering 750 to 759 (GHGDHLDRAK) has biased composition (basic and acidic residues). Phosphoserine occurs at positions 761, 773, and 777. Low complexity predominate over residues 978–994 (DAAGSPAEPSPPAASGE).

The protein belongs to the STK11IP family. In terms of assembly, found in a ternary complex composed of STK11/LKB1, STK11IP and SMAD4. Interacts with STK11/LKB1 and SMAD4.

It localises to the cytoplasm. Its function is as follows. May regulate STK11/LKB1 function by controlling its subcellular localization. The chain is Serine/threonine-protein kinase 11-interacting protein (STK11IP) from Homo sapiens (Human).